A 312-amino-acid polypeptide reads, in one-letter code: Oxidoreductase NAD-binding domain-containing protein 1 (312 aa).

An N-terminal signal peptide occupies residues 1–17 (MACAAVMIPGLLRCSVG). In terms of domain architecture, FAD-binding FR-type spans 50–186 (HMERTASVLR…GGVGINPLLS (137 aa)). 178–183 (GVGINP) provides a ligand contact to NAD(+).

The polypeptide is Oxidoreductase NAD-binding domain-containing protein 1 (OXNAD1) (Homo sapiens (Human)).